The following is a 139-amino-acid chain: Large ribosomal subunit protein uL16 (139 aa).

A compositionally biased stretch (basic residues) spans 1 to 16 (MLIPKRTKYRKQHRPV). The segment at 1–22 (MLIPKRTKYRKQHRPVRSGMSK) is disordered.

This sequence belongs to the universal ribosomal protein uL16 family. In terms of assembly, part of the 50S ribosomal subunit.

In terms of biological role, binds 23S rRNA and is also seen to make contacts with the A and possibly P site tRNAs. In Bifidobacterium longum (strain DJO10A), this protein is Large ribosomal subunit protein uL16.